We begin with the raw amino-acid sequence, 59 residues long: Potassium channel toxin alpha-KTx 15.2 (59 aa).

Positions 1–22 are cleaved as a signal peptide; that stretch reads MKFSSIILLTLLICSMSKFGNC. Gln23 bears the Pyrrolidone carboxylic acid mark. Cystine bridges form between Cys30-Cys50, Cys35-Cys55, and Cys39-Cys57.

This sequence belongs to the short scorpion toxin superfamily. Potassium channel inhibitor family. Alpha-KTx 15 subfamily. In terms of tissue distribution, expressed by the venom gland.

Its subcellular location is the secreted. Functionally, blocks both human ERG1/Kv11.1/KCNH2 potassium channels (in a reversible manner) and A-type voltage-gated potassium channels Kv4/KCND (in an irreversible manner). The presence of the Kv4-associated proteins DPP6 or DPP10 is mandatory to have high-affinity blockade of Kv4.2/KCND2 and Kv4.3/KCND3 channels. In contrast, the presence of the Kv4-associated protein KChIP1/KCNIP1 does not enhance the affinity blockade. May dispose of two functional faces (A and B); the two basic residues (Arg-40 and Lys-41) on the alpha-helix side of the peptide that blocks the hERG current (face A) and the typical dyad through which it blocks A-type currents on the beta-sheet side (face B). In adult rat brain, it binds to sites in the striatum, hippocampus, superior colliculus, and cerebellum. It shares the same target in rat brain than AaTX1 (AC Q867F4) and AmmTX3 (AC P60208). In DPP6 knockout mice, A-type currents are much less affected by the toxin than in wild-type mice. This is Potassium channel toxin alpha-KTx 15.2 from Olivierus martensii (Manchurian scorpion).